The primary structure comprises 1125 residues: Phytochrome A (1125 aa).

Composition is skewed to low complexity over residues 1–14 (MSSS…SNSA) and 39–48 (SGSSFDYSSS). Disordered stretches follow at residues 1–22 (MSSS…SARI) and 38–64 (ESGS…PRSD). The GAF domain occupies 218-401 (SMERLCDTMV…VFAIHVNKEL (184 aa)). Cys323 is a phytochromobilin binding site. 2 consecutive PAS domains span residues 617-687 (VTSE…LQGK) and 750-821 (DYKA…VNLG). The Histidine kinase domain occupies 901 to 1117 (YLKKQIWNPL…SFIISVELAG (217 aa)).

The protein belongs to the phytochrome family. Homodimer. Post-translationally, contains one covalently linked phytochromobilin chromophore.

In terms of biological role, regulatory photoreceptor which exists in two forms that are reversibly interconvertible by light: the Pr form that absorbs maximally in the red region of the spectrum and the Pfr form that absorbs maximally in the far-red region. Photoconversion of Pr to Pfr induces an array of morphogenic responses, whereas reconversion of Pfr to Pr cancels the induction of those responses. Pfr controls the expression of a number of nuclear genes including those encoding the small subunit of ribulose-bisphosphate carboxylase, chlorophyll A/B binding protein, protochlorophyllide reductase, rRNA, etc. It also controls the expression of its own gene(s) in a negative feedback fashion. The sequence is that of Phytochrome A (PHYA) from Populus tremuloides (Quaking aspen).